A 363-amino-acid chain; its full sequence is UDP-N-acetylglucosamine--N-acetylmuramyl-(pentapeptide) pyrophosphoryl-undecaprenol N-acetylglucosamine transferase (363 aa).

Residues Thr-10–Gly-12, Asn-124, Ser-195, Ile-250, and Gln-295 each bind UDP-N-acetyl-alpha-D-glucosamine.

This sequence belongs to the glycosyltransferase 28 family. MurG subfamily.

It is found in the cell membrane. The catalysed reaction is Mur2Ac(oyl-L-Ala-gamma-D-Glu-L-Lys-D-Ala-D-Ala)-di-trans,octa-cis-undecaprenyl diphosphate + UDP-N-acetyl-alpha-D-glucosamine = beta-D-GlcNAc-(1-&gt;4)-Mur2Ac(oyl-L-Ala-gamma-D-Glu-L-Lys-D-Ala-D-Ala)-di-trans,octa-cis-undecaprenyl diphosphate + UDP + H(+). The protein operates within cell wall biogenesis; peptidoglycan biosynthesis. Functionally, cell wall formation. Catalyzes the transfer of a GlcNAc subunit on undecaprenyl-pyrophosphoryl-MurNAc-pentapeptide (lipid intermediate I) to form undecaprenyl-pyrophosphoryl-MurNAc-(pentapeptide)GlcNAc (lipid intermediate II). This Lactiplantibacillus plantarum (strain ATCC BAA-793 / NCIMB 8826 / WCFS1) (Lactobacillus plantarum) protein is UDP-N-acetylglucosamine--N-acetylmuramyl-(pentapeptide) pyrophosphoryl-undecaprenol N-acetylglucosamine transferase.